Here is an 89-residue protein sequence, read N- to C-terminus: Small ribosomal subunit protein uS14 (89 aa).

The protein belongs to the universal ribosomal protein uS14 family. As to quaternary structure, part of the 30S ribosomal subunit. Contacts proteins S3 and S10.

Its function is as follows. Binds 16S rRNA, required for the assembly of 30S particles and may also be responsible for determining the conformation of the 16S rRNA at the A site. The polypeptide is Small ribosomal subunit protein uS14 (Chlorobium phaeobacteroides (strain BS1)).